Reading from the N-terminus, the 434-residue chain is Methylenetetrahydrofolate--tRNA-(uracil-5-)-methyltransferase TrmFO (434 aa).

10 to 15 (GAGLAG) provides a ligand contact to FAD.

It belongs to the MnmG family. TrmFO subfamily. Requires FAD as cofactor.

The protein localises to the cytoplasm. The enzyme catalyses uridine(54) in tRNA + (6R)-5,10-methylene-5,6,7,8-tetrahydrofolate + NADH + H(+) = 5-methyluridine(54) in tRNA + (6S)-5,6,7,8-tetrahydrofolate + NAD(+). The catalysed reaction is uridine(54) in tRNA + (6R)-5,10-methylene-5,6,7,8-tetrahydrofolate + NADPH + H(+) = 5-methyluridine(54) in tRNA + (6S)-5,6,7,8-tetrahydrofolate + NADP(+). Its function is as follows. Catalyzes the folate-dependent formation of 5-methyl-uridine at position 54 (M-5-U54) in all tRNAs. The chain is Methylenetetrahydrofolate--tRNA-(uracil-5-)-methyltransferase TrmFO from Bacillus cereus (strain ATCC 10987 / NRS 248).